A 223-amino-acid chain; its full sequence is PKHD-type hydroxylase CPS_3426 (223 aa).

Residues 77 to 175 form the Fe2OG dioxygenase domain; it reads KSMMPFIISE…RKVALTWIES (99 aa). Fe cation contacts are provided by His96, Asp98, and His156. Arg166 provides a ligand contact to 2-oxoglutarate.

Requires Fe(2+) as cofactor. L-ascorbate is required as a cofactor.

This Colwellia psychrerythraea (strain 34H / ATCC BAA-681) (Vibrio psychroerythus) protein is PKHD-type hydroxylase CPS_3426.